A 234-amino-acid polypeptide reads, in one-letter code: 1-(5-phosphoribosyl)-5-[(5-phosphoribosylamino)methylideneamino] imidazole-4-carboxamide isomerase (234 aa).

Catalysis depends on D9, which acts as the Proton acceptor. Catalysis depends on D131, which acts as the Proton donor.

The protein belongs to the HisA/HisF family.

Its subcellular location is the cytoplasm. The catalysed reaction is 1-(5-phospho-beta-D-ribosyl)-5-[(5-phospho-beta-D-ribosylamino)methylideneamino]imidazole-4-carboxamide = 5-[(5-phospho-1-deoxy-D-ribulos-1-ylimino)methylamino]-1-(5-phospho-beta-D-ribosyl)imidazole-4-carboxamide. The protein operates within amino-acid biosynthesis; L-histidine biosynthesis; L-histidine from 5-phospho-alpha-D-ribose 1-diphosphate: step 4/9. This is 1-(5-phosphoribosyl)-5-[(5-phosphoribosylamino)methylideneamino] imidazole-4-carboxamide isomerase from Staphylococcus epidermidis (strain ATCC 35984 / DSM 28319 / BCRC 17069 / CCUG 31568 / BM 3577 / RP62A).